The sequence spans 247 residues: MyoD family inhibitor domain-containing protein (247 aa).

Disordered stretches follow at residues 1-67 and 80-110; these read MSCA…NPSA and QLQT…GNGI. Residues 74 to 247 enclose the MDFI domain; sequence QPERLPQLQT…MECCGICFPS (174 aa). 2 positions are modified to phosphoserine: serine 129 and serine 141.

This sequence belongs to the MDFI family. In terms of assembly, interacts with HAND1; the interaction sequesters Hand1 into the nucleolus and inhibits its activity. Interacts (via C-terminus) with ZIC2. Interacts (via C-terminus) with AXIN1, the histidine-rich region of CCNT1/cyclin-T and weakly with LEF1. Interacts with CCNT2. Interacts with GATA2. Interacts (via C-terminus) with Piezo channel composed of PIEZO1 or PIEZO2; the interaction prolongs Piezo channel inactivation. In terms of processing, palmitoylated. In terms of tissue distribution, in the embryo, robust expression is detected between 16.5 and 18.5 dpc in lung, kidney, and salivary glands. In the developing cardiovascular system, it is detected in lymphatic and cardiac valves (at protein level).

It localises to the cytoplasm. The protein localises to the secreted. Required to control the activity of various transcription factors through their sequestration in the cytoplasm. Retains nuclear Zic proteins ZIC1, ZIC2 and ZIC3 in the cytoplasm and inhibits their transcriptional activation. Modulates the expression from cellular promoters. Binds to the axin complex, resulting in an increase in the level of free beta-catenin. Affects axin-regulation of the WNT and JNK signaling pathways. Involved in the development of lymphatic vessel valves. Required to promote lymphatic endothelial cell migration, in a process that involves down-regulation of integrin beta 1 activation and control of cell adhesion to the extracellular matrix. Regulates the activity of mechanosensitive Piezo channel. In Mus musculus (Mouse), this protein is MyoD family inhibitor domain-containing protein.